The chain runs to 143 residues: Transcriptional regulator MraZ (143 aa).

SpoVT-AbrB domains follow at residues Glu5–Glu47 and Ala76–Arg119.

The protein belongs to the MraZ family. In terms of assembly, forms oligomers.

It localises to the cytoplasm. The protein localises to the nucleoid. The polypeptide is Transcriptional regulator MraZ (Enterococcus faecalis (strain ATCC 700802 / V583)).